A 152-amino-acid polypeptide reads, in one-letter code: 3-hydroxyacyl-[acyl-carrier-protein] dehydratase FabZ (152 aa).

The active site involves His-54.

This sequence belongs to the thioester dehydratase family. FabZ subfamily.

It is found in the cytoplasm. The enzyme catalyses a (3R)-hydroxyacyl-[ACP] = a (2E)-enoyl-[ACP] + H2O. In terms of biological role, involved in unsaturated fatty acids biosynthesis. Catalyzes the dehydration of short chain beta-hydroxyacyl-ACPs and long chain saturated and unsaturated beta-hydroxyacyl-ACPs. The polypeptide is 3-hydroxyacyl-[acyl-carrier-protein] dehydratase FabZ (Roseobacter denitrificans (strain ATCC 33942 / OCh 114) (Erythrobacter sp. (strain OCh 114))).